A 457-amino-acid chain; its full sequence is Cysteine desulfurase (457 aa).

5 residues coordinate pyridoxal 5'-phosphate: alanine 127, threonine 128, glutamine 235, serine 255, and histidine 257. Position 258 is an N6-(pyridoxal phosphate)lysine (lysine 258). Position 295 (threonine 295) interacts with pyridoxal 5'-phosphate. Cysteine 381 functions as the Cysteine persulfide intermediate in the catalytic mechanism. Residue cysteine 381 coordinates [2Fe-2S] cluster. Cysteine 381 is a Zn(2+) binding site. Cysteine 381 is modified (cysteine persulfide).

Belongs to the class-V pyridoxal-phosphate-dependent aminotransferase family. NifS/IscS subfamily. As to quaternary structure, homodimer. Component of the mitochondrial core iron-sulfur cluster (ISC) complex composed of NFS1, LYRM4, NDUFAB1, ISCU, FXN, and FDX2; this complex is a heterohexamer containing two copies of each monomer. Component of cyteine desulfurase complex composed of NFS1, LYRM4 and NDUFAB1; this complex contributes to the activation of cysteine desulfurase activity and NFS1 stabilization. Interacts (homodimer form) with ISCU (D-state); each monomer interacts with the C-terminal regions of each NFS1 monomer. Interacts with HSPA9. Interacts (via homodimer form) with FDX2. Interacts (via homodimer form) with FXN. Interacts with LYRM4. Component of a complex composed of FXN, NFS1, LYRM4 and ISCU. In terms of assembly, monomer. Homodimer. Oligomer. Interacts with ISCU. Component of the cysteine desulfurase complex composed of NFS1 and LYRM4; this complex contributes to the activation of cysteine desulfurase activity. Interacts with MOCS3. Pyridoxal 5'-phosphate serves as cofactor. N-gluconoylated. Post-translationally, cysteine persulfide intermediate is reduced by thiol-containing molecules like glutathione and L-cysteine. Persulfide reduction is a rate-limiting step of cysteine desulfurase catalytic cycle. As to expression, predominantly expressed in heart and skeletal muscle. Also found in brain, liver and pancreas.

The protein resides in the mitochondrion. It is found in the cytoplasm. Its subcellular location is the nucleus. It localises to the cytoskeleton. The protein localises to the microtubule organizing center. The protein resides in the centrosome. It carries out the reaction (sulfur carrier)-H + L-cysteine = (sulfur carrier)-SH + L-alanine. It catalyses the reaction L-cysteinyl-[cysteine desulfurase] + L-cysteine = S-sulfanyl-L-cysteinyl-[cysteine desulfurase] + L-alanine. Active only in complex with LYRM4. Its function is as follows. Cysteine desulfurase, of the core iron-sulfur cluster (ISC) assembly complex, that catalyzes the desulfuration of L-cysteine to L-alanine, as component of the cysteine desulfurase complex, leading to the formation of a cysteine persulfide intermediate at the active site cysteine residue and participates in the [2Fe-2S] clusters assembly on the scaffolding protein ISCU. The persulfide is then transferred on the flexible Cys loop from the catalytic site of NFS1 to the surface of NFS1. After the NFS1-linked persulfide sulfur is transferred to one of the conserved Cys residues of the scaffold, a reaction assisted by FXN. The core iron-sulfur cluster (ISC) assembly complex is involved in the de novo synthesis of a [2Fe-2S] cluster, the first step of the mitochondrial iron-sulfur protein biogenesis. This process is initiated by the cysteine desulfurase complex (NFS1:LYRM4:NDUFAB1) that produces persulfide which is delivered on the scaffold protein ISCU in a FXN-dependent manner. Then this complex is stabilized by FDX2 which provides reducing equivalents to accomplish the [2Fe-2S] cluster assembly. Finally, the [2Fe-2S] cluster is transferred from ISCU to chaperone proteins, including HSCB, HSPA9 and GLRX5. In terms of biological role, may catalyze the desulfuration of L-cysteine to L-alanine as component of the cysteine desulfurase complex (NFS1:LYRM4), leading to the formation of a cysteine persulfide intermediate. Acts as a sulfur donor for MOCS3 by transferring the sulfur of the cysteine persulfide intermediate on MOCS3. This Homo sapiens (Human) protein is Cysteine desulfurase.